Here is a 117-residue protein sequence, read N- to C-terminus: UPF0102 protein Rsph17025_0472 (117 aa).

It belongs to the UPF0102 family.

The chain is UPF0102 protein Rsph17025_0472 from Cereibacter sphaeroides (strain ATCC 17025 / ATH 2.4.3) (Rhodobacter sphaeroides).